The sequence spans 141 residues: Protein C19orf12 homolog (141 aa).

Residues 37–57 (GLAFAGGLIGGPLGIAVGGAV) form a helical membrane-spanning segment.

The protein belongs to the C19orf12 family.

Its subcellular location is the mitochondrion. The protein localises to the mitochondrion membrane. The protein resides in the endoplasmic reticulum. It is found in the cytoplasm. It localises to the cytosol. This Danio rerio (Zebrafish) protein is Protein C19orf12 homolog.